The chain runs to 105 residues: Acylphosphatase (105 aa).

One can recognise an Acylphosphatase-like domain in the interval 16–105 (RLTAWVRGRV…RGGYSGFTQA (90 aa)). Active-site residues include Arg-31 and Asn-49.

This sequence belongs to the acylphosphatase family.

The enzyme catalyses an acyl phosphate + H2O = a carboxylate + phosphate + H(+). This Acidothermus cellulolyticus (strain ATCC 43068 / DSM 8971 / 11B) protein is Acylphosphatase (acyP).